We begin with the raw amino-acid sequence, 196 residues long: Recombination protein RecR (196 aa).

A C4-type zinc finger spans residues 57–72 (CERCNTFTEAPVCSTC). One can recognise a Toprim domain in the interval 80 to 175 (RQLCVVETPA…SVTRLARGVP (96 aa)).

It belongs to the RecR family.

Its function is as follows. May play a role in DNA repair. It seems to be involved in an RecBC-independent recombinational process of DNA repair. It may act with RecF and RecO. This is Recombination protein RecR from Methylibium petroleiphilum (strain ATCC BAA-1232 / LMG 22953 / PM1).